A 166-amino-acid polypeptide reads, in one-letter code: Ribonuclease P protein component (166 aa).

This sequence belongs to the RnpA family. In terms of assembly, consists of a catalytic RNA component (M1 or rnpB) and a protein subunit.

The enzyme catalyses Endonucleolytic cleavage of RNA, removing 5'-extranucleotides from tRNA precursor.. In terms of biological role, RNaseP catalyzes the removal of the 5'-leader sequence from pre-tRNA to produce the mature 5'-terminus. It can also cleave other RNA substrates such as 4.5S RNA. The protein component plays an auxiliary but essential role in vivo by binding to the 5'-leader sequence and broadening the substrate specificity of the ribozyme. The protein is Ribonuclease P protein component of Helicobacter pylori (strain HPAG1).